Reading from the N-terminus, the 539-residue chain is Effector protein hopAB1 (539 aa).

4 disordered regions span residues 1–93 (MPGI…PEAQ), 163–220 (QTVR…RHPQ), 230–249 (ASAARHNHSANQTNEALRRL), and 315–336 (RQTTTNSPELPPLASSAESGRR). Residues 18–31 (TDGEPVTEREHDSS) are compositionally biased toward basic and acidic residues. The span at 181-194 (SSSGSSQRSLIGRS) shows a compositional bias: low complexity.

It belongs to the HopAB family.

It localises to the secreted. Effector protein that plays different roles depending on the species and plant cultivars that interact with the pathogen. Acts as a virulence determinant by enhancing the development of disease symptoms and bacterial growth. Acts as an avirulence factor by eliciting hypersensitive response (HR) and plant resistance. The chain is Effector protein hopAB1 (hopAB1) from Pseudomonas savastanoi pv. phaseolicola (strain 1448A / Race 6) (Pseudomonas syringae pv. phaseolicola (strain 1448A / Race 6)).